A 90-amino-acid polypeptide reads, in one-letter code: Co-chaperonin GroES (90 aa).

Belongs to the GroES chaperonin family. In terms of assembly, heptamer of 7 subunits arranged in a ring. Interacts with the chaperonin GroEL.

The protein resides in the cytoplasm. Functionally, together with the chaperonin GroEL, plays an essential role in assisting protein folding. The GroEL-GroES system forms a nano-cage that allows encapsulation of the non-native substrate proteins and provides a physical environment optimized to promote and accelerate protein folding. GroES binds to the apical surface of the GroEL ring, thereby capping the opening of the GroEL channel. This Borreliella burgdorferi (strain ATCC 35210 / DSM 4680 / CIP 102532 / B31) (Borrelia burgdorferi) protein is Co-chaperonin GroES.